The following is a 500-amino-acid chain: Cryptochrome DASH (500 aa).

Residues 4–138 enclose the Photolyase/cryptochrome alpha/beta domain; sequence KTVLVWYRND…PVRSFWGTTL (135 aa).

Belongs to the DNA photolyase class-1 family. FAD serves as cofactor. (6R)-5,10-methylene-5,6,7,8-tetrahydrofolate is required as a cofactor.

In terms of biological role, may have a photoreceptor function. Binds DNA; probably functions as a transcriptional repressor. This Gloeobacter violaceus (strain ATCC 29082 / PCC 7421) protein is Cryptochrome DASH (cry).